Here is a 329-residue protein sequence, read N- to C-terminus: Fructose-1,6-bisphosphatase class 1 (329 aa).

Residues E84, D103, L105, and D106 each contribute to the Mg(2+) site. Residues 106–109, N196, and K262 contribute to the substrate site; that span reads DGSS. Position 268 (E268) interacts with Mg(2+).

Belongs to the FBPase class 1 family. Homotetramer. Mg(2+) serves as cofactor.

It localises to the cytoplasm. It carries out the reaction beta-D-fructose 1,6-bisphosphate + H2O = beta-D-fructose 6-phosphate + phosphate. The protein operates within carbohydrate biosynthesis; gluconeogenesis. The protein is Fructose-1,6-bisphosphatase class 1 of Shewanella halifaxensis (strain HAW-EB4).